Here is a 294-residue protein sequence, read N- to C-terminus: NAD kinase (294 aa).

The Proton acceptor role is filled by aspartate 74. Residues 74-75 (DG), 148-149 (NE), histidine 159, arginine 176, aspartate 178, 189-194 (TAYSLS), and glutamine 249 each bind NAD(+).

It belongs to the NAD kinase family. A divalent metal cation is required as a cofactor.

Its subcellular location is the cytoplasm. The enzyme catalyses NAD(+) + ATP = ADP + NADP(+) + H(+). Functionally, involved in the regulation of the intracellular balance of NAD and NADP, and is a key enzyme in the biosynthesis of NADP. Catalyzes specifically the phosphorylation on 2'-hydroxyl of the adenosine moiety of NAD to yield NADP. This is NAD kinase from Vibrio vulnificus (strain CMCP6).